The chain runs to 377 residues: Endoplasmic reticulum-Golgi intermediate compartment protein 2 (377 aa).

Over methionine 1–glycine 33 the chain is Cytoplasmic. Residues glycine 34–valine 54 traverse the membrane as a helical segment. Topologically, residues tyrosine 55–cysteine 319 are lumenal. The helical transmembrane segment at glycine 320 to valine 340 threads the bilayer. Residues glutamate 341–histidine 377 are Cytoplasmic-facing.

Belongs to the ERGIC family. As to quaternary structure, may form a heteromeric complex composed of ERGIC1, ERGIC2 and ERGIC3. Interacts with ERGIC3, the interaction is required for the stable expression of both proteins. May interact with EEF1A1. As to expression, ubiquitously expressed.

It is found in the endoplasmic reticulum-Golgi intermediate compartment membrane. The protein localises to the golgi apparatus. Its subcellular location is the cis-Golgi network membrane. It localises to the endoplasmic reticulum membrane. The protein resides in the cytoplasm. It is found in the nucleus. In terms of biological role, possible role in transport between endoplasmic reticulum and Golgi. The protein is Endoplasmic reticulum-Golgi intermediate compartment protein 2 (ERGIC2) of Homo sapiens (Human).